We begin with the raw amino-acid sequence, 260 residues long: Proteasome subunit alpha (260 aa).

The protein belongs to the peptidase T1A family. As to quaternary structure, the 20S proteasome core is composed of 14 alpha and 14 beta subunits that assemble into four stacked heptameric rings, resulting in a barrel-shaped structure. The two inner rings, each composed of seven catalytic beta subunits, are sandwiched by two outer rings, each composed of seven alpha subunits. The catalytic chamber with the active sites is on the inside of the barrel. Has a gated structure, the ends of the cylinder being occluded by the N-termini of the alpha-subunits. Is capped at one or both ends by the proteasome regulatory ATPase, PAN.

It localises to the cytoplasm. With respect to regulation, the formation of the proteasomal ATPase PAN-20S proteasome complex, via the docking of the C-termini of PAN into the intersubunit pockets in the alpha-rings, triggers opening of the gate for substrate entry. Interconversion between the open-gate and close-gate conformations leads to a dynamic regulation of the 20S proteasome proteolysis activity. In terms of biological role, component of the proteasome core, a large protease complex with broad specificity involved in protein degradation. The protein is Proteasome subunit alpha of Thermococcus kodakarensis (strain ATCC BAA-918 / JCM 12380 / KOD1) (Pyrococcus kodakaraensis (strain KOD1)).